The primary structure comprises 64 residues: MSALAIEKSWKDVDLRDGATSHPAGLGFGELTFEDLREDRTIYAASSGWVCTLTIECGTVICAC.

A propeptide spanning residues 1–45 is cleaved from the precursor; it reads MSALAIEKSWKDVDLRDGATSHPAGLGFGELTFEDLREDRTIYAA. The lanthionine (Ser-Cys) cross-link spans 46-51; sequence SSGWVC. Cross-links (beta-methyllanthionine (Thr-Cys)) lie at residues 52 to 57 and 54 to 62; these read TLTIEC and TIECGTVIC. Residues 59-64 constitute a cross-link (beta-methyllanthionine sulfoxide (Thr-Cys)); that stretch reads TVICAC.

It belongs to the type B lantibiotic family. In terms of processing, maturation of lantibiotics involves the enzymatic conversion of Thr, and Ser into dehydrated AA by the enzyme garM and the formation of thioether bonds with cysteine. The 59-64 beta-methyllanthionine thioether bond is oxidized to a sulfoxide by the monooxygenase GarO. This is followed by membrane translocation and cleavage of the modified precursor. The sulfoxide group of the 59-64 beta-methyllanthionine thioether bond is mildly important for activity, since the antibacterial activity of deoxyactagardine is marginally lower compared with oxidized actagardine.

Its function is as follows. Has potent antibacterial activity against some Gram-positive bacteria. Has good antistreptococcal activity. Inhibits cell wall biosynthesis by binding to lipid II and blocking transglycosylation. The sequence is that of Lantibiotic actagardine from Actinoplanes garbadinensis.